Reading from the N-terminus, the 280-residue chain is Eukaryotic translation initiation factor 3 subunit F-1 (280 aa).

In terms of domain architecture, MPN spans 8–138 (VRVHPVVLFQ…LRAYVCIQLG (131 aa)).

This sequence belongs to the eIF-3 subunit F family. Component of the eukaryotic translation initiation factor 3 (eIF-3) complex. The eIF-3 complex interacts with pix.

It localises to the cytoplasm. Functionally, component of the eukaryotic translation initiation factor 3 (eIF-3) complex, which is involved in protein synthesis of a specialized repertoire of mRNAs and, together with other initiation factors, stimulates binding of mRNA and methionyl-tRNAi to the 40S ribosome. The eIF-3 complex specifically targets and initiates translation of a subset of mRNAs involved in cell proliferation. The protein is Eukaryotic translation initiation factor 3 subunit F-1 of Drosophila willistoni (Fruit fly).